A 216-amino-acid chain; its full sequence is Thiamine-phosphate synthase (216 aa).

4-amino-2-methyl-5-(diphosphooxymethyl)pyrimidine contacts are provided by residues 35–39 (QLRDK) and Asn67. Mg(2+) is bound by residues Asp68 and Asp87. 4-amino-2-methyl-5-(diphosphooxymethyl)pyrimidine is bound at residue Ser106. Residue 132–134 (TSS) coordinates 2-[(2R,5Z)-2-carboxy-4-methylthiazol-5(2H)-ylidene]ethyl phosphate. Lys135 is a binding site for 4-amino-2-methyl-5-(diphosphooxymethyl)pyrimidine. 2-[(2R,5Z)-2-carboxy-4-methylthiazol-5(2H)-ylidene]ethyl phosphate is bound by residues Gly163 and 183–184 (IS).

Belongs to the thiamine-phosphate synthase family. Mg(2+) is required as a cofactor.

The catalysed reaction is 2-[(2R,5Z)-2-carboxy-4-methylthiazol-5(2H)-ylidene]ethyl phosphate + 4-amino-2-methyl-5-(diphosphooxymethyl)pyrimidine + 2 H(+) = thiamine phosphate + CO2 + diphosphate. It carries out the reaction 2-(2-carboxy-4-methylthiazol-5-yl)ethyl phosphate + 4-amino-2-methyl-5-(diphosphooxymethyl)pyrimidine + 2 H(+) = thiamine phosphate + CO2 + diphosphate. The enzyme catalyses 4-methyl-5-(2-phosphooxyethyl)-thiazole + 4-amino-2-methyl-5-(diphosphooxymethyl)pyrimidine + H(+) = thiamine phosphate + diphosphate. Its pathway is cofactor biosynthesis; thiamine diphosphate biosynthesis; thiamine phosphate from 4-amino-2-methyl-5-diphosphomethylpyrimidine and 4-methyl-5-(2-phosphoethyl)-thiazole: step 1/1. In terms of biological role, condenses 4-methyl-5-(beta-hydroxyethyl)thiazole monophosphate (THZ-P) and 2-methyl-4-amino-5-hydroxymethyl pyrimidine pyrophosphate (HMP-PP) to form thiamine monophosphate (TMP). The polypeptide is Thiamine-phosphate synthase (Methanoregula boonei (strain DSM 21154 / JCM 14090 / 6A8)).